Here is a 144-residue protein sequence, read N- to C-terminus: Protein MIX23 (144 aa).

A2 is subject to N-acetylalanine. Positions 82–120 form a coiled coil; that stretch reads VKNLREEREKNLDDLTLLKQLRKEQTKLKWMQSELNVEE. An N6-acetyllysine modification is found at K100.

It belongs to the MIX23 family.

The sequence is that of Protein MIX23 from Homo sapiens (Human).